A 1057-amino-acid chain; its full sequence is Carbamoyl phosphate synthase large chain (1057 aa).

The interval 1 to 401 is carboxyphosphate synthetic domain; that stretch reads MPKRDDIQTI…SLLKAIRSLE (401 aa). Residues Arg-129, Arg-169, Gly-175, Gly-176, Lys-208, Ile-210, Glu-215, Gly-241, Ile-242, His-243, Gln-284, and Glu-298 each contribute to the ATP site. Positions 133–327 constitute an ATP-grasp 1 domain; that stretch reads RTLMNDLNVP…IAKLAAKIAV (195 aa). Residues Gln-284, Glu-298, and Asn-300 each coordinate Mg(2+). 3 residues coordinate Mn(2+): Gln-284, Glu-298, and Asn-300. The interval 402–546 is oligomerization domain; that stretch reads YGVHHLGLPN…YGTYEDENES (145 aa). The interval 547 to 929 is carbamoyl phosphate synthetic domain; it reads IVTDKEKILV…ALYKGLTGSG (383 aa). Residues 671-861 form the ATP-grasp 2 domain; it reads EALLREISVP…MAQLAMRAIM (191 aa). 10 residues coordinate ATP: Arg-707, Arg-746, Leu-748, Glu-752, Gly-777, Val-778, His-779, Ser-780, Gln-820, and Glu-832. Gln-820, Glu-832, and Asn-834 together coordinate Mg(2+). Mn(2+) is bound by residues Gln-820, Glu-832, and Asn-834. Residues 930–1057 enclose the MGS-like domain; it reads FEVKDHGTVL…ESMTFTMRNV (128 aa). Residues 930 to 1057 are allosteric domain; that stretch reads FEVKDHGTVL…ESMTFTMRNV (128 aa).

This sequence belongs to the CarB family. Composed of two chains; the small (or glutamine) chain promotes the hydrolysis of glutamine to ammonia, which is used by the large (or ammonia) chain to synthesize carbamoyl phosphate. Tetramer of heterodimers (alpha,beta)4. The cofactor is Mg(2+). Mn(2+) serves as cofactor.

It carries out the reaction hydrogencarbonate + L-glutamine + 2 ATP + H2O = carbamoyl phosphate + L-glutamate + 2 ADP + phosphate + 2 H(+). It catalyses the reaction hydrogencarbonate + NH4(+) + 2 ATP = carbamoyl phosphate + 2 ADP + phosphate + 2 H(+). Its pathway is amino-acid biosynthesis; L-arginine biosynthesis; carbamoyl phosphate from bicarbonate: step 1/1. The protein operates within pyrimidine metabolism; UMP biosynthesis via de novo pathway; (S)-dihydroorotate from bicarbonate: step 1/3. In terms of biological role, large subunit of the glutamine-dependent carbamoyl phosphate synthetase (CPSase). CPSase catalyzes the formation of carbamoyl phosphate from the ammonia moiety of glutamine, carbonate, and phosphate donated by ATP, constituting the first step of 2 biosynthetic pathways, one leading to arginine and/or urea and the other to pyrimidine nucleotides. The large subunit (synthetase) binds the substrates ammonia (free or transferred from glutamine from the small subunit), hydrogencarbonate and ATP and carries out an ATP-coupled ligase reaction, activating hydrogencarbonate by forming carboxy phosphate which reacts with ammonia to form carbamoyl phosphate. This Staphylococcus epidermidis (strain ATCC 35984 / DSM 28319 / BCRC 17069 / CCUG 31568 / BM 3577 / RP62A) protein is Carbamoyl phosphate synthase large chain.